The sequence spans 48 residues: Sperm protamine P1 (48 aa).

Belongs to the protamine P1 family. Testis.

It localises to the nucleus. Its subcellular location is the chromosome. In terms of biological role, protamines substitute for histones in the chromatin of sperm during the haploid phase of spermatogenesis. They compact sperm DNA into a highly condensed, stable and inactive complex. This is Sperm protamine P1 (PRM1) from Eptesicus fuscus (Big brown bat).